A 194-amino-acid chain; its full sequence is Cysteine and glycine-rich protein 3 (194 aa).

The tract at residues 1-5 (MPNWG) is interaction with TCAP. The LIM zinc-binding 1 domain maps to 10-61 (CGACEKTVYHAEEIQCNGRSFHKTCFHCMACRKALDSTTVAAHESEIYCKVC). The Nuclear localization signal motif lies at 64–69 (RRYGPK). The interval 94-105 (QSPKPARSVTTS) is interaction with CLF2 and isoform 2. 2 positions are modified to phosphoserine: Ser95 and Ser153. An LIM zinc-binding 2 domain is found at 120–171 (CPRCGKSVYAAEKVMGGGKPWHKTCFRCAICGKSLESTNVTDKDGELYCKVC).

Self-associates. Oligomeric in the cytoplasm and monomeric in the nucleus. Homooligomers preferentially form along the actin cytoskeleton. Isoform 2 interacts with isoform 1. Isoform 1 but not isoform 2 interacts with MYOD1 and MYOG. Isoform 1 interacts with TCAP, ACTN2 and NRAP. Isoform 2 interacts with TCAP and alpha-actinin. Interacts with LDHD. Interacts (via N-terminus)with GLRX3 (via C-terminus) and PPP3CA; GLRX3 and calcineurin compete for interaction with CSRP3. Interacts with MYF6. Interacts with CFL2; the stoichiometry influences F-actin depolymerization and possibly two molecules of CFL2 can interact with one molecule of CSRP3 resulting in the highest functional impact; the interaction is stronger with phosphorylated CFL2. In terms of processing, phosphorylated by PKC/PRKCA. Cardiac and slow-twitch skeletal muscles. Isoform 2 is expressed in striated muscle. Isoform 2 is specifically expressed at higher levels in patients with neuromuscular diseases, such as limb-girdle muscular dystrophy 2A (LGMD2A), Duchenne muscular dystrophy (DMD) and dermatomyositis.

Its subcellular location is the nucleus. The protein localises to the cytoplasm. It is found in the cytoskeleton. It localises to the myofibril. The protein resides in the sarcomere. Its subcellular location is the z line. In terms of biological role, positive regulator of myogenesis. Acts as a cofactor for myogenic bHLH transcription factors such as MYOD1, and probably MYOG and MYF6. Enhances the DNA-binding activity of the MYOD1:TCF3 isoform E47 complex and may promote formation of a functional MYOD1:TCF3 isoform E47:MEF2A complex involved in myogenesis. Plays a crucial and specific role in the organization of cytosolic structures in cardiomyocytes. Could play a role in mechanical stretch sensing. May be a scaffold protein that promotes the assembly of interacting proteins at Z-line structures. It is essential for calcineurin anchorage to the Z line. Required for stress-induced calcineurin-NFAT activation. The role in regulation of cytoskeleton dynamics by association with CFL2 is reported conflictingly: Shown to enhance CFL2-mediated F-actin depolymerization dependent on the CSRP3:CFL2 molecular ratio, and also shown to reduce the ability of CLF1 and CFL2 to enhance actin depolymerization. Proposed to contribute to the maintenance of muscle cell integrity through an actin-based mechanism. Can directly bind to actin filaments, cross-link actin filaments into bundles without polarity selectivity and protect them from dilution- and cofilin-mediated depolymerization; the function seems to involve its self-association. In vitro can inhibit PKC/PRKCA activity. Proposed to be involved in cardiac stress signaling by down-regulating excessive PKC/PRKCA signaling. Its function is as follows. May play a role in early sarcomere organization. Overexpression in myotubes negatively regulates myotube differentiation. By association with isoform 1 and thus changing the CSRP3 isoform 1:CFL2 stoichiometry is proposed to down-regulate CFL2-mediated F-actin depolymerization. The chain is Cysteine and glycine-rich protein 3 (CSRP3) from Homo sapiens (Human).